A 236-amino-acid polypeptide reads, in one-letter code: Phosphoribosylformylglycinamidine synthase subunit PurQ (236 aa).

Positions 3–234 (FGVIVFPGSN…VDWWERGERL (232 aa)) constitute a Glutamine amidotransferase type-1 domain. Catalysis depends on Cys-86, which acts as the Nucleophile. Catalysis depends on residues His-203 and Glu-205.

As to quaternary structure, part of the FGAM synthase complex composed of 1 PurL, 1 PurQ and 2 PurS subunits.

The protein localises to the cytoplasm. The enzyme catalyses N(2)-formyl-N(1)-(5-phospho-beta-D-ribosyl)glycinamide + L-glutamine + ATP + H2O = 2-formamido-N(1)-(5-O-phospho-beta-D-ribosyl)acetamidine + L-glutamate + ADP + phosphate + H(+). It carries out the reaction L-glutamine + H2O = L-glutamate + NH4(+). The protein operates within purine metabolism; IMP biosynthesis via de novo pathway; 5-amino-1-(5-phospho-D-ribosyl)imidazole from N(2)-formyl-N(1)-(5-phospho-D-ribosyl)glycinamide: step 1/2. Its function is as follows. Part of the phosphoribosylformylglycinamidine synthase complex involved in the purines biosynthetic pathway. Catalyzes the ATP-dependent conversion of formylglycinamide ribonucleotide (FGAR) and glutamine to yield formylglycinamidine ribonucleotide (FGAM) and glutamate. The FGAM synthase complex is composed of three subunits. PurQ produces an ammonia molecule by converting glutamine to glutamate. PurL transfers the ammonia molecule to FGAR to form FGAM in an ATP-dependent manner. PurS interacts with PurQ and PurL and is thought to assist in the transfer of the ammonia molecule from PurQ to PurL. The polypeptide is Phosphoribosylformylglycinamidine synthase subunit PurQ (Moorella thermoacetica (strain ATCC 39073 / JCM 9320)).